An 88-amino-acid chain; its full sequence is YcgL domain-containing protein CGSHiGG_01115 (88 aa).

Residues 1 to 85 (MLCAIYKSKK…QDDGLFNSLS (85 aa)) enclose the YcgL domain.

The sequence is that of YcgL domain-containing protein CGSHiGG_01115 from Haemophilus influenzae (strain PittGG).